The chain runs to 370 residues: Acyl-CoA:lysophosphatidylglycerol acyltransferase 1 (370 aa).

A helical transmembrane segment spans residues 22-42 (FAFMVVNNLVAIPSYICYVII). The short motif at 101–106 (HQATGD) is the HXXXXD motif element. The helical transmembrane segment at 342–362 (LWIFLIQSFAFLSGYMWYNII) threads the bilayer.

The protein belongs to the 1-acyl-sn-glycerol-3-phosphate acyltransferase family. In terms of tissue distribution, highly expressed in liver and placenta. Also expressed in peripheral blood, lung, kidney and brain. Detected at lower levels in colon. High expression is detected in brain and testis.

Its subcellular location is the endoplasmic reticulum membrane. The catalysed reaction is a 2-acyl-sn-glycero-3-phosphoethanolamine + octadecanoyl-CoA = 1-octadecanoyl-2-acyl-sn-glycero-3-phosphoethanolamine + CoA. It carries out the reaction 2-(9Z-octadecenoyl)-sn-glycero-3-phosphoethanolamine + octadecanoyl-CoA = 1-octadecanoyl-2-(9Z-octadecenoyl)-sn-glycero-3-phosphoethanolamine + CoA. The enzyme catalyses a 2-acyl-sn-glycero-3-phosphoethanolamine + hexadecanoyl-CoA = 1-hexadecanoyl-2-acyl-sn-glycero-3-phosphoethanolamine + CoA. It catalyses the reaction 2-(9Z-octadecenoyl)-sn-glycero-3-phosphoethanolamine + hexadecanoyl-CoA = 1-hexadecanoyl-2-(9Z-octadecenoyl)-sn-glycero-3-phosphoethanolamine + CoA. The catalysed reaction is 1-tetradecanoyl-sn-glycero-3-phospho-(1'-sn-glycerol) + hexadecanoyl-CoA = 1-tetradecanoyl-2-hexadecanoyl-sn-glycero-3-phospho-(1'-sn-glycerol) + CoA. It carries out the reaction 1-hexadecanoyl-sn-glycero-3-phospho-(1'-sn-glycerol) + dodecanoyl-CoA = 1-hexadecanoyl-2-dodecanoyl-sn-glycero-3-phospho-(1'-sn-glycerol) + CoA. The enzyme catalyses 1-hexadecanoyl-sn-glycero-3-phospho-(1'-sn-glycerol) + hexadecanoyl-CoA = 1,2-dihexadecanoyl-sn-glycero-3-phospho-(1'-sn-glycerol) + CoA. It catalyses the reaction 1-hexadecanoyl-sn-glycero-3-phospho-(1'-sn-glycerol) + octadecanoyl-CoA = 1-hexadecanoyl-2-octadecanoyl-sn-glycero-3-phospho-(1'-sn-glycerol) + CoA. The catalysed reaction is 1-octadecanoyl-sn-glycero-3-phospho-(1'-sn-glycerol) + hexadecanoyl-CoA = 1-octadecanoyl-2-hexadecanoyl-sn-glycero-3-phospho-(1'-sn-glycerol) + CoA. It carries out the reaction 1-(9Z-octadecenoyl)-sn-glycero-3-phospho-(1'-sn-glycerol) + dodecanoyl-CoA = 1-(9Z-octadecenoyl)-2-dodecanoyl-sn-glycero-3-phospho-(1'-sn-glycerol) + CoA. The enzyme catalyses 1-hexadecanoyl-sn-glycero-3-phospho-(1'-sn-glycerol) + (9Z)-octadecenoyl-CoA = 1-hexadecanoyl-2-(9Z-octadecenoyl)-sn-glycero-3-phospho-(1'-sn-glycerol) + CoA. It catalyses the reaction 1-(9Z-octadecenoyl)-sn-glycero-3-phospho-(1'-sn-glycerol) + hexadecanoyl-CoA = 1-(9Z-octadecenoyl)-2-hexadecanoyl-sn-glycero-3-phospho-(1'-sn-glycerol) + CoA. The catalysed reaction is 1-(9Z-octadecenoyl)-sn-glycero-3-phospho-(1'-sn-glycerol) + (9Z)-octadecenoyl-CoA = 1,2-di-(9Z-octadecenoyl)-sn-glycero-3-phospho-(1'-sn-glycerol) + CoA. It carries out the reaction a 2-acylglycerol + an acyl-CoA = a 1,2-diacylglycerol + CoA. The enzyme catalyses a 2-acylglycerol + hexadecanoyl-CoA = a 1-hexadecanoyl-2-acylglycerol + CoA. It catalyses the reaction a 1-acylglycerol + hexadecanoyl-CoA = an hexadecanoyl-acylglycerol + CoA. The catalysed reaction is a 2-acyl-sn-glycero-3-phosphocholine + an acyl-CoA = a 1,2-diacyl-sn-glycero-3-phosphocholine + CoA. It carries out the reaction 2-(9Z-octadecenoyl)-sn-glycero-3-phosphocholine + octadecanoyl-CoA = 1-octadecanoyl-2-(9Z-octadecenoyl)-sn-glycero-3-phosphocholine + CoA. The enzyme catalyses 2-(9Z,12Z-octadecadienoyl)-sn-glycero-3-phosphocholine + octadecanoyl-CoA = 1-octadecanoyl-2-(9Z,12Z)-octadecadienoyl-sn-glycero-3-phosphocholine + CoA. It catalyses the reaction 2-(5Z,8Z,11Z,14Z)-eicosatetraenoyl-sn-glycero-3-phosphocholine + octadecanoyl-CoA = 1-octadecanoyl-2-(5Z,8Z,11Z,14Z-eicosatetraenoyl)-sn-glycero-3-phosphocholine + CoA. The catalysed reaction is 2-(9Z-octadecenoyl)-sn-glycero-3-phosphocholine + hexadecanoyl-CoA = 1-hexadecanoyl-2-(9Z-octadecenoyl)-sn-glycero-3-phosphocholine + CoA. It carries out the reaction 2-(9Z-octadecenoyl)-sn-glycero-3-phospho-L-serine + hexadecanoyl-CoA = 1-hexadecanoyl-2-(9Z-octadecenoyl)-sn-glycero-3-phospho-L-serine + CoA. The enzyme catalyses 2-(4Z,7Z,10Z,13Z,16Z,19Z-docosahexaenoyl)-sn-glycero-3-phosphocholine + octadecanoyl-CoA = 1-octadecanoyl-2-(4Z,7Z,10Z,13Z,16Z,19Z-docosahexaenoyl)-sn-glycero-3-phosphocholine + CoA. It catalyses the reaction 1-(9Z-octadecenoyl)-sn-glycero-3-phospho-L-serine + octadecanoyl-CoA = 1-(9Z-octadecenoyl)-2-octadecanoyl-sn-glycero-3-phospho-L-serine + CoA. The catalysed reaction is a 2-acyl-sn-glycero-3-phosphoethanolamine + a fatty acyl-CoA = a 1,2-diacyl-sn-glycero-3-phosphoethanolamine + CoA. Its function is as follows. Lysophospholipid acyltransferase involved in fatty acyl chain remodeling of glycerophospholipids in the endoplasmic reticulum membrane. Selectively catalyzes the transfer and esterification of saturated long-chain fatty acids from acyl-CoA to the sn-1 position of 1-lyso-2-acyl phosphatidylethanolamines (1-lyso-PE, LPE), with a preference for stearoyl CoA over palmitoyl CoA as acyl donor. Acts in concert with an unknown phospholipase A1 to convert palmitate phosphatidylethanolamine (PE) species into stearate ones. Provides substrates to the PE methylation pathway, controlling stearate/palmitate composition of PE and phosphatidylcholine (PC) species with an overall impact on de novo hepatic lipid synthesis, body fat content and life span. Can acylate lysophosphatidylglycerols (LPG) using various saturated fatty acyl-CoAs as acyl donors. Can also acylate monoacylglycerols with a preference for 2-monoacylglycerols over 1-monoacylglycerols. Has no activity toward lysophosphatidic acids (LPA). This Homo sapiens (Human) protein is Acyl-CoA:lysophosphatidylglycerol acyltransferase 1.